The primary structure comprises 255 residues: 1-(5-phosphoribosyl)-5-[(5-phosphoribosylamino)methylideneamino] imidazole-4-carboxamide isomerase (255 aa).

The active-site Proton acceptor is D8. Residue D129 is the Proton donor of the active site.

Belongs to the HisA/HisF family.

The protein localises to the cytoplasm. The catalysed reaction is 1-(5-phospho-beta-D-ribosyl)-5-[(5-phospho-beta-D-ribosylamino)methylideneamino]imidazole-4-carboxamide = 5-[(5-phospho-1-deoxy-D-ribulos-1-ylimino)methylamino]-1-(5-phospho-beta-D-ribosyl)imidazole-4-carboxamide. The protein operates within amino-acid biosynthesis; L-histidine biosynthesis; L-histidine from 5-phospho-alpha-D-ribose 1-diphosphate: step 4/9. The polypeptide is 1-(5-phosphoribosyl)-5-[(5-phosphoribosylamino)methylideneamino] imidazole-4-carboxamide isomerase (Prochlorococcus marinus (strain MIT 9301)).